We begin with the raw amino-acid sequence, 735 residues long: Ribosomal protein S6 kinase alpha-1 (735 aa).

Residue Ser54 is modified to Phosphoserine. A Protein kinase 1 domain is found at 62–321 (FELLKVLGQG…AEEIKRHIFY (260 aa)). Residues 68–76 (LGQGSFGKV) and Lys94 each bind ATP. The active-site Proton acceptor is the Asp187. Residue Ser221 is modified to Phosphoserine; by PDPK1. Ser307 is subject to Phosphoserine. The AGC-kinase C-terminal domain occupies 322-391 (STIDWNKLYR…VATGLMEDDS (70 aa)). Thr359 carries the phosphothreonine modification. Phosphoserine is present on Ser363. Ser369 and Ser380 each carry phosphoserine; by autocatalysis. Residues 418–675 (YIVKETIGVG…AKQVLQHPWI (258 aa)) enclose the Protein kinase 2 domain. ATP is bound by residues 424 to 432 (IGVGSYSVC) and Lys447. The active-site Proton acceptor is Asp535. Thr573 bears the Phosphothreonine mark. Ser732 bears the Phosphoserine mark.

It belongs to the protein kinase superfamily. AGC Ser/Thr protein kinase family. S6 kinase subfamily. Forms a complex with either MAPK1/ERK2 or MAPK3/ERK1 in quiescent cells. Transiently dissociates following mitogenic stimulation. Interacts with ETV1/ER81 and FGFR1. It depends on Mg(2+) as a cofactor. Post-translationally, activated by phosphorylation at Ser-221 by PDPK1. Autophosphorylated on Ser-380, as part of the activation process. May be phosphorylated at Thr-359 and Ser-363 by MAPK1/ERK2 and MAPK3/ERK1. In terms of processing, N-terminal myristoylation results in an activated kinase in the absence of added growth factors.

The protein localises to the nucleus. Its subcellular location is the cytoplasm. It carries out the reaction L-seryl-[protein] + ATP = O-phospho-L-seryl-[protein] + ADP + H(+). The catalysed reaction is L-threonyl-[protein] + ATP = O-phospho-L-threonyl-[protein] + ADP + H(+). Its activity is regulated as follows. Upon extracellular signal or mitogen stimulation, phosphorylated at Thr-573 in the C-terminal kinase domain (CTKD) by MAPK1/ERK2 and MAPK3/ERK1. The activated CTKD then autophosphorylates Ser-380, allowing binding of PDPK1, which in turn phosphorylates Ser-221 in the N-terminal kinase domain (NTDK) leading to the full activation of the protein and subsequent phosphorylation of the substrates by the NTKD. Functionally, serine/threonine-protein kinase that acts downstream of ERK (MAPK1/ERK2 and MAPK3/ERK1) signaling and mediates mitogenic and stress-induced activation of the transcription factors CREB1, ETV1/ER81 and NR4A1/NUR77, regulates translation through RPS6 and EIF4B phosphorylation, and mediates cellular proliferation, survival, and differentiation by modulating mTOR signaling and repressing pro-apoptotic function of BAD and DAPK1. In fibroblast, is required for EGF-stimulated phosphorylation of CREB1, which results in the subsequent transcriptional activation of several immediate-early genes. In response to mitogenic stimulation (EGF and PMA), phosphorylates and activates NR4A1/NUR77 and ETV1/ER81 transcription factors and the cofactor CREBBP. Upon insulin-derived signal, acts indirectly on the transcription regulation of several genes by phosphorylating GSK3B at 'Ser-9' and inhibiting its activity. Phosphorylates RPS6 in response to serum or EGF via an mTOR-independent mechanism and promotes translation initiation by facilitating assembly of the pre-initiation complex. In response to insulin, phosphorylates EIF4B, enhancing EIF4B affinity for the EIF3 complex and stimulating cap-dependent translation. Is involved in the mTOR nutrient-sensing pathway by directly phosphorylating TSC2 at 'Ser-1798', which potently inhibits TSC2 ability to suppress mTOR signaling, and mediates phosphorylation of RPTOR, which regulates mTORC1 activity and may promote rapamycin-sensitive signaling independently of the PI3K/AKT pathway. Also involved in feedback regulation of mTORC1 and mTORC2 by phosphorylating DEPTOR. Mediates cell survival by phosphorylating the pro-apoptotic proteins BAD and DAPK1 and suppressing their pro-apoptotic function. Promotes the survival of hepatic stellate cells by phosphorylating CEBPB in response to the hepatotoxin carbon tetrachloride (CCl4). Mediates induction of hepatocyte prolifration by TGFA through phosphorylation of CEBPB. Is involved in cell cycle regulation by phosphorylating the CDK inhibitor CDKN1B, which promotes CDKN1B association with 14-3-3 proteins and prevents its translocation to the nucleus and inhibition of G1 progression. Phosphorylates EPHA2 at 'Ser-897', the RPS6KA-EPHA2 signaling pathway controls cell migration. In response to mTORC1 activation, phosphorylates EIF4B at 'Ser-406' and 'Ser-422' which stimulates bicarbonate cotransporter SLC4A7 mRNA translation, increasing SLC4A7 protein abundance and function. This is Ribosomal protein S6 kinase alpha-1 (Rps6ka1) from Rattus norvegicus (Rat).